The primary structure comprises 2479 residues: Centrosomal protein of 290 kDa (2479 aa).

The self-association (with itself or C-terminus) stretch occupies residues 1 to 695 (MPPNINWKEI…IESKNAEGIF (695 aa)). Coiled coils occupy residues 59-565 (MKMK…ERGK), 598-664 (SLKN…MQKD), 697-931 (ASLH…VCEK), 958-1027 (SLSE…IEQA), 1071-1498 (QRAE…ILSR), 1533-1584 (HTLK…LHIL), and 1635-2452 (DSLS…SEQL). The segment covering 149–163 (ALRNEEAENENSKLR) has biased composition (basic and acidic residues). Residues 149–168 (ALRNEEAENENSKLRRENKR) are disordered. Residues 696-896 (DASLHLKAQV…TVLQVNEKSL (201 aa)) form an interaction with IQCB1 region. The segment at 1966-2479 (TTGMTVDQVL…EESPVNFPIY (514 aa)) is self-association (with itself or N-terminus). Residues 2458–2479 (SPVAASEEFEDEEESPVNFPIY) are disordered.

Part of the tectonic-like complex (also named B9 complex). Interacts with ATF4 via its N-terminal region. Associates with the BBSome complex, interacting (via N-terminus) with BBS4. Interacts with IQCB1/NPHP5; IQCB1 and CEP290/NPHP6 are proposed to form a functional NPHP5-6 module localized to the centrosome. Interacts with NPHP4; the interaction likely requires additional interactors. Interacts with ZNF423, FAM161A, CEP162, CEP162, CEP131, TALPID3, CCDC13, CC2D2A, RPGRIP1. Can self-associate (homo- or heteromeric). Interacts with CCP110; required for suppressing cilia formation. Interacts with RPGR. Associates (via C-terminus) with microtubules; association to microtubule is reduced in response to cellular stress, such as ultraviolet light (UV) radiation or heat shock, in a process that requires p38 MAP kinase signaling. Interacts with FAM161A. Interacts with PCM1. Interacts with CCDC66. Interacts with ARMC9 and CSPP1. In terms of processing, ubiquitinated. May undergo monoubiquitination; monoubiquitination is inhibited in response to cellular stress, such as ultraviolet light (UV) radiation or heat shock, but does not cause its displacement from centriolar satellites. Ubiquitous. Expressed strongly in placenta and weakly in brain.

The protein localises to the cytoplasm. It is found in the cytoskeleton. The protein resides in the microtubule organizing center. It localises to the centrosome. Its subcellular location is the centriolar satellite. The protein localises to the nucleus. It is found in the cell projection. The protein resides in the cilium. It localises to the cilium basal body. Its subcellular location is the centriole. The protein localises to the cytoplasmic vesicle. Its function is as follows. Involved in early and late steps in cilia formation. Its association with CCP110 is required for inhibition of primary cilia formation by CCP110. May play a role in early ciliogenesis in the disappearance of centriolar satellites and in the transition of primary ciliar vesicles (PCVs) to capped ciliary vesicles (CCVs). Required for the centrosomal recruitment of RAB8A and for the targeting of centriole satellite proteins to centrosomes such as of PCM1. Required for the correct localization of ciliary and phototransduction proteins in retinal photoreceptor cells; may play a role in ciliary transport processes. Required for efficient recruitment of RAB8A to primary cilium. In the ciliary transition zone is part of the tectonic-like complex which is required for tissue-specific ciliogenesis and may regulate ciliary membrane composition. Involved in regulation of the BBSome complex integrity, specifically for presence of BBS2, BBS5 and BBS8/TTC8 in the complex, and in ciliary targeting of selected BBSome cargos. May play a role in controlling entry of the BBSome complex to cilia possibly implicating IQCB1/NPHP5. Activates ATF4-mediated transcription. In Homo sapiens (Human), this protein is Centrosomal protein of 290 kDa (CEP290).